The sequence spans 627 residues: Protein fem-1 homolog B (627 aa).

ANK repeat units follow at residues 45–74 (QRST…VQTQ), 87–116 (DGAT…NVNH), 120–149 (TNST…NISI), and 153–182 (YDNT…DPNA). 3 residues coordinate Zn(2+): histidine 185, cysteine 186, and histidine 218. ANK repeat units follow at residues 186-215 (CGAT…AIVV) and 218-248 (HGMT…DRRS). Residues 344–377 (SHPIIYRGAVYADNMEFEQCIKLWLHALHLRQKG) form a TPR repeat. ANK repeat units lie at residues 483-527 (EGFS…EVNA) and 531-568 (EGNS…HTDM).

Belongs to the fem-1 family. As to quaternary structure, component of a CRL2 E3 ubiquitin-protein ligase complex, also named ECS (Elongin BC-CUL2/5-SOCS-box protein) complex, composed of CUL2, Elongin BC (ELOB and ELOC), RBX1 and substrate-specific adapter FEM1B. Homooligomer. Interacts with PPM1F and PHTF1. Interacts with the death domain of FAS/TNFRSF6 and TNFRSF1A. Interacts with CHEK1. Interacts with NKX3-1. Expressed in pancreatic islets, within both beta cells and non-beta cells (at protein level). Highly expressed in adult testis; expressed in all types of spermatogonia. Also expressed in the prostate of neonatal mice.

The protein resides in the cytoplasm. It localises to the nucleus. Its pathway is protein modification; protein ubiquitination. Its activity is regulated as follows. Activity of the CRL2(FEM1B) complex toward FNIP1 is inhibited by BEX family proteins (BEX1, BEX2, BEX3 and/or BEX4) in absence of reductive stress. Mechanistically, BEX proteins act as pseudosubstrate inhibitors that associate with FEM1B via zinc in absence of reductive stress, thereby preventing association between FEM1B and FNIP1. Its function is as follows. Substrate-recognition component of a Cul2-RING (CRL2) E3 ubiquitin-protein ligase complex of the DesCEND (destruction via C-end degrons) pathway, which recognizes a C-degron located at the extreme C terminus of target proteins, leading to their ubiquitination and degradation. The C-degron recognized by the DesCEND pathway is usually a motif of less than ten residues and can be present in full-length proteins, truncated proteins or proteolytically cleaved forms. The CRL2(FEM1B) complex specifically recognizes proteins ending with -Gly-Leu-Asp-Arg, such as CDK5R1, leading to their ubiquitination and degradation. Also acts as a regulator of the reductive stress response by mediating ubiquitination of reduced FNIP1: in response to reductive stress, the CRL2(FEM1B) complex specifically recognizes a conserved Cys degron in FNIP1 when this degron is reduced, leading to FNIP1 degradation and subsequent activation of mitochondria to recalibrate reactive oxygen species (ROS). Mechanistically, recognizes and binds reduced FNIP1 through two interface zinc ions, which act as a molecular glue that recruit reduced FNIP1 to FEM1B. Promotes ubiquitination of GLI1, suppressing GLI1 transcriptional activator activity. Promotes ubiquitination and degradation of ANKRD37. Promotes ubiquitination and degradation of SLBP. Involved in apoptosis by acting as a death receptor-associated protein that mediates apoptosis. Also involved in glucose homeostasis in pancreatic islet. May also act as an adapter/mediator in replication stress-induced signaling that leads to the activation of CHEK1. This is Protein fem-1 homolog B from Mus musculus (Mouse).